The following is a 138-amino-acid chain: Probable phospholipase A2 homolog 1 (138 aa).

A signal peptide spans 1-21; the sequence is MPPRSPLLALVFLAAGVLSSA. Intrachain disulfides connect C29–C56, C33–C62, C38–C109, C49–C69, C68–C93, and C75–C86. Ca(2+) contacts are provided by Y48, G50, and W53. The active site involves H72. D73 contributes to the Ca(2+) binding site.

It belongs to the phospholipase A2 family. Requires Ca(2+) as cofactor.

The protein localises to the secreted. The enzyme catalyses a 1,2-diacyl-sn-glycero-3-phosphocholine + H2O = a 1-acyl-sn-glycero-3-phosphocholine + a fatty acid + H(+). Functionally, PA2 catalyzes the calcium-dependent hydrolysis of the 2-acyl groups in 3-sn-phosphoglycerides. Releases lysophospholipids (LPLs) and free fatty acids (FFAs) from membrane phospholipids in response to hormones and other external stimuli. The protein is Probable phospholipase A2 homolog 1 (PLA2-I) of Oryza sativa subsp. japonica (Rice).